A 289-amino-acid polypeptide reads, in one-letter code: ATP synthase subunit a (289 aa).

6 helical membrane passes run Ala-43–Phe-63, Ile-104–Ile-124, Phe-160–Ile-180, Ile-193–Ala-213, Val-232–Val-252, and Ala-259–Val-279.

This sequence belongs to the ATPase A chain family. F-type ATPases have 2 components, CF(1) - the catalytic core - and CF(0) - the membrane proton channel. CF(1) has five subunits: alpha(3), beta(3), gamma(1), delta(1), epsilon(1). CF(0) has three main subunits: a(1), b(2) and c(9-12). The alpha and beta chains form an alternating ring which encloses part of the gamma chain. CF(1) is attached to CF(0) by a central stalk formed by the gamma and epsilon chains, while a peripheral stalk is formed by the delta and b chains.

Its subcellular location is the cell inner membrane. Functionally, key component of the proton channel; it plays a direct role in the translocation of protons across the membrane. This is ATP synthase subunit a from Pseudomonas putida (strain ATCC 47054 / DSM 6125 / CFBP 8728 / NCIMB 11950 / KT2440).